The following is a 379-amino-acid chain: Chaperone protein DnaJ (379 aa).

The J domain occupies Asp-5–Gly-70. The segment at Gly-135–Glu-213 adopts a CR-type zinc-finger fold. Residues Cys-148, Cys-151, Cys-165, Cys-168, Cys-187, Cys-190, Cys-201, and Cys-204 each contribute to the Zn(2+) site. 4 CXXCXGXG motif repeats span residues Cys-148–Gly-155, Cys-165–Gly-172, Cys-187–Gly-194, and Cys-201–Gly-208.

Belongs to the DnaJ family. In terms of assembly, homodimer. Zn(2+) serves as cofactor.

The protein resides in the cytoplasm. In terms of biological role, participates actively in the response to hyperosmotic and heat shock by preventing the aggregation of stress-denatured proteins and by disaggregating proteins, also in an autonomous, DnaK-independent fashion. Unfolded proteins bind initially to DnaJ; upon interaction with the DnaJ-bound protein, DnaK hydrolyzes its bound ATP, resulting in the formation of a stable complex. GrpE releases ADP from DnaK; ATP binding to DnaK triggers the release of the substrate protein, thus completing the reaction cycle. Several rounds of ATP-dependent interactions between DnaJ, DnaK and GrpE are required for fully efficient folding. Also involved, together with DnaK and GrpE, in the DNA replication of plasmids through activation of initiation proteins. The sequence is that of Chaperone protein DnaJ from Anaplasma marginale (strain Florida).